A 249-amino-acid polypeptide reads, in one-letter code: Probable transcriptional regulatory protein MXAN_4974 (249 aa).

Belongs to the TACO1 family.

Its subcellular location is the cytoplasm. The sequence is that of Probable transcriptional regulatory protein MXAN_4974 from Myxococcus xanthus (strain DK1622).